Consider the following 268-residue polypeptide: Putative hydro-lyase A1S_1268 (268 aa).

It belongs to the D-glutamate cyclase family.

This chain is Putative hydro-lyase A1S_1268, found in Acinetobacter baumannii (strain ATCC 17978 / DSM 105126 / CIP 53.77 / LMG 1025 / NCDC KC755 / 5377).